The chain runs to 231 residues: Protein INCA1 (231 aa).

Residues 75-99 (SLHPLEGLPPPEKLWRRKRKKLHLE) form an interaction with CCNA1 and CCNA1/CDK2 complex; essential for CDK2 inhibitory activity region. Residues 90–95 (RRKRKK) carry the Nuclear localization signal motif. T180 carries the phosphothreonine modification.

The protein belongs to the INCA family. As to quaternary structure, interacts with CCNA1. Identified in a complex with CCNA1 and CDK2. Interacts with ZNF16; the interaction inhibits INCA1 activity and induces the cell cycle process. Interacts with SPACA9. Interacts with CCNA2, CCNB1 and CCNE1. Interacts with the CCNA1/CDK2 complex. Interacts with ING5, DAZAP2, RNF26, USP15, SPOUT1, DPH7, TRIM26 and RAB5C. In terms of processing, phosphorylated when part of a complex with CCNA1 and CDK2.

The protein resides in the nucleus. It localises to the cytoplasm. Functionally, binds to CDK2-bound cyclins and inhibits the kinase activity of CDK2; binding to cyclins is critical for its function as CDK inhibitor. Inhibits cell growth and proliferation and may play a role in cell cycle control. Required for ING5-mediated regulation of S-phase progression, enhancement of Fas-induced apoptosis and inhibition of cell growth. In Mus musculus (Mouse), this protein is Protein INCA1 (Inca1).